Here is a 469-residue protein sequence, read N- to C-terminus: MNNSEQFLSPRMGRVEQIHFVGIGGAGMCGIAEVLHNQGYRITGSDLGESGTVQRLRSLGIQVYIGHRLENIKGADVVVRSSAVDFNNPEIVAARELMIPVIPRAAMLAELMRFRHGIAIAGTHGKTTTTSLVSSLLAEGGLDPSFVIGGKLNSCGANAQLGKSAYFVVEADESDASFLFLKPMMAVVTNIDADHMDTYEGDFEKLRTTFLEFLHHLPFYGLAVVCLEDEEICRILPAIQRPTLTYGFKEEAHYRAINWTQKGMLSEFVVVRPAPHKQLTIQFQYPGRHNVLNALASIAIATELGVDDDSIVRGLQKFQGVGRRFQMLGEKQFEKGAAIIVDDYGHHPQEILSTIDAFRRVWPERRLVHVFQPHRYTRTQSLHRQFVDVLSLSDELLLMDIYAAGETAIPGVTSENLANEIRSRDKRVTIVSEQSLKATLDEFIKDGDVILMQGAGSIGQMAVNLMKNM.

122 to 128 (GTHGKTT) serves as a coordination point for ATP.

This sequence belongs to the MurCDEF family.

It is found in the cytoplasm. It carries out the reaction UDP-N-acetyl-alpha-D-muramate + L-alanine + ATP = UDP-N-acetyl-alpha-D-muramoyl-L-alanine + ADP + phosphate + H(+). Its pathway is cell wall biogenesis; peptidoglycan biosynthesis. Cell wall formation. This Legionella pneumophila (strain Paris) protein is UDP-N-acetylmuramate--L-alanine ligase.